Consider the following 246-residue polypeptide: Homeobox protein Hox-B4a (246 aa).

Residues 23-125 (YSQSDYLPSH…SQNTSTVSSR (103 aa)) form a disordered region. Composition is skewed to polar residues over residues 39–48 (AQRQDPSFQH) and 112–123 (QTPTSQNTSTVS). The short motif at 130–135 (VYPWMK) is the Antp-type hexapeptide element. Positions 151–210 (PKRSRTAYTRQQVLELEKEFHYNRYLTRRRRVEIAHTLCLSERQIKIWFQNRRMKWKKDH) form a DNA-binding region, homeobox. Residues 210-246 (HKLPNTKIRSNSASTNSSGCPTLCSNQSRASGPPPSL) form a disordered region. A compositionally biased stretch (polar residues) spans 216–239 (KIRSNSASTNSSGCPTLCSNQSRA).

Belongs to the Antp homeobox family. Deformed subfamily.

The protein localises to the nucleus. In terms of biological role, sequence-specific transcription factor which is part of a developmental regulatory system that provides cells with specific positional identities on the anterior-posterior axis. The sequence is that of Homeobox protein Hox-B4a (hoxb4a) from Danio rerio (Zebrafish).